Reading from the N-terminus, the 396-residue chain is Cathepsin E (396 aa).

A signal peptide spans 1-19 (MKTLPLLLLLLLDLGQAQG). The propeptide at 20–53 (TLDRVPLRRQPSLRKKLRAQGQLSEFWKAHKVDM) is activation peptide. In terms of domain architecture, Peptidase A1 spans 78 to 392 (YFGTISIGSP…DRGSNRVGLA (315 aa)). N-linked (GlcNAc...) asparagine glycosylation is present at asparagine 90. Residue aspartate 96 is part of the active site. 2 disulfides stabilise this stretch: cysteine 109/cysteine 114 and cysteine 272/cysteine 276. Residue aspartate 281 is part of the active site. A disulfide bond links cysteine 314 and cysteine 351.

The protein belongs to the peptidase A1 family. As to quaternary structure, homodimer; disulfide-linked. Glycosylated. The nature of the carbohydrate chain varies between cell types.

Its subcellular location is the endosome. It carries out the reaction Similar to cathepsin D, but slightly broader specificity.. Its function is as follows. May have a role in immune function. Probably involved in the processing of antigenic peptides during MHC class II-mediated antigen presentation. May play a role in activation-induced lymphocyte depletion in the thymus, and in neuronal degeneration and glial cell activation in the brain. This is Cathepsin E (CTSE) from Oryctolagus cuniculus (Rabbit).